Consider the following 408-residue polypeptide: Protein ZNF365 (408 aa).

At S16 the chain carries Phosphoserine. Residues 26–51 form a C2H2-type; degenerate zinc finger; that stretch reads FRCPRCGDHTRFRSLSSLRAHLEFSH. Residues S139 and S146 each carry the phosphoserine modification. Residues 170–298 adopt a coiled-coil conformation; that stretch reads VEAVDRTIEK…QLEYYQSQQA (129 aa). T176 is subject to Phosphothreonine. Phosphoserine is present on S370.

In terms of assembly, homodimer. Interacts with NDE1 and NDEL1. Interacts with DISC1. Interacts with PARP1. Interacts with MCRS1. In terms of tissue distribution, detected in several tissues, with highest levels in brain. Also expressed during embryonic development. Expressed in cerebral cortex, hippocampus, striatum, inferior colliculus and thalamus.

The protein localises to the cytoplasm. It localises to the cytoskeleton. It is found in the microtubule organizing center. The protein resides in the centrosome. In terms of biological role, contributes to genomic stability by preventing telomere dysfunction. Involved in the morphogenesis of basket cells in the somatosensory cortex during embryogenesis. Involved in the positive regulation of oligodendrocyte differentiation during postnatal growth. Involved in dendritic arborization, morphogenesis of spine density dendrite, and establishment of postsynaptic dendrite density in cortical pyramidal neurons. Involved in the regulation of neurogenesis. Negatively regulates neurite outgrowth. Involved in homologous recombination (HR) repair pathway. Required for proper resolution of DNA double-strand breaks (DSBs) by HR. Is required for recovery of stalled replication forks, and directly contributes to genomic stability. Interacts with PARP1 and mediates MRE11-dependent DNA end resection during replication fork recovery. The polypeptide is Protein ZNF365 (Znf365) (Mus musculus (Mouse)).